A 240-amino-acid polypeptide reads, in one-letter code: UDP-2,3-diacylglucosamine hydrolase (240 aa).

Asp9, His11, Asp43, Asn81, and His116 together coordinate Mn(2+). 81–82 (NR) serves as a coordination point for substrate. Substrate-binding residues include Asp124, Ser162, Lys166, Lys169, and His197. Mn(2+) is bound by residues His197 and His199.

The protein belongs to the LpxH family. Mn(2+) serves as cofactor.

It is found in the cell inner membrane. The enzyme catalyses UDP-2-N,3-O-bis[(3R)-3-hydroxytetradecanoyl]-alpha-D-glucosamine + H2O = 2-N,3-O-bis[(3R)-3-hydroxytetradecanoyl]-alpha-D-glucosaminyl 1-phosphate + UMP + 2 H(+). Its pathway is glycolipid biosynthesis; lipid IV(A) biosynthesis; lipid IV(A) from (3R)-3-hydroxytetradecanoyl-[acyl-carrier-protein] and UDP-N-acetyl-alpha-D-glucosamine: step 4/6. Functionally, hydrolyzes the pyrophosphate bond of UDP-2,3-diacylglucosamine to yield 2,3-diacylglucosamine 1-phosphate (lipid X) and UMP by catalyzing the attack of water at the alpha-P atom. Involved in the biosynthesis of lipid A, a phosphorylated glycolipid that anchors the lipopolysaccharide to the outer membrane of the cell. The protein is UDP-2,3-diacylglucosamine hydrolase of Neisseria gonorrhoeae (strain ATCC 700825 / FA 1090).